Reading from the N-terminus, the 648-residue chain is Sodium/nucleoside cotransporter 1 (648 aa).

Over 1-83 (MADDTPRQRE…LCREHWQLFE (83 aa)) the chain is Cytoplasmic. Residues 84–104 (WISKGLLSTAYIGFLIVACLL) form a helical membrane-spanning segment. The Extracellular segment spans residues 105–108 (DFPR). A helical membrane pass occupies residues 109 to 129 (ALALFVITCVVLVFLAYNLLK). Residues 130 to 147 (RLLGSKLKKCVKFQGHSC) lie on the Cytoplasmic side of the membrane. The chain crosses the membrane as a helical span at residues 148–168 (LSLWLKRGLALAAGLGVILWL). Residues 169-175 (SLDTAQR) lie on the Extracellular side of the membrane. Residues 176–196 (PEQLVSFAGICVFLVLLFAGS) form a helical membrane-spanning segment. Residues 197–201 (KHHRA) are Cytoplasmic-facing. The chain crosses the membrane as a helical span at residues 202–222 (VSWRAVSWGLGLQFVLGLFVI). Over 223-265 (RTEPGFVAFQWLGDQIRVFLSYTEAGSSFVFGEALVKDVFAFQ) the chain is Extracellular. The chain crosses the membrane as a helical span at residues 266 to 286 (VLPIIVFFSCVMSVLYYLGLM). Residues 287 to 294 (QWVILKIA) lie on the Cytoplasmic side of the membrane. Residues 295–318 (WLMQVTMGTSATETLSVAGNIFVS) form a helical membrane-spanning segment. Residues 319-339 (QTEAPLLIRPYLADMTLSEVH) are Extracellular-facing. The chain crosses the membrane as a helical span at residues 340-360 (VVMTGGYATIAGSLLGAYISF). G361 is a topological domain (cytoplasmic). The helical transmembrane segment at 362–380 (IDASSLIAASVMAAPCALA) threads the bilayer. The Extracellular segment spans residues 381–427 (LSKLVYPEVEESKFRSEEGVKLTYGDAQNLVEAASAGAAISVKVVAN). A helical membrane pass occupies residues 428–448 (IAANLIAFLAVLAFINAALSW). The Cytoplasmic segment spans residues 449–470 (LGDMVDIQGLSFQLICSYVLRP). A helical membrane pass occupies residues 471 to 491 (VAFLMGVAWEDCPVVAELLGI). Residues 492 to 531 (KLFLNEFVAYQELSQYKQRRLAGAEEWLGDKKQWISVRAE) are Extracellular-facing. Residues 532–552 (ILTTYALCGFANFSSIGIMLG) traverse the membrane as a helical segment. The Cytoplasmic segment spans residues 553–571 (GLTSMVPQRRSDFSQIVLR). Residues 572 to 592 (ALITGAFVSLVNACVAGILYV) form a helical membrane-spanning segment. Over 593 to 648 (PRGVEVDCMSLLNQTVSSSSFEVYLCCRQVFQNTSLEFGQEALHNCCRFYNHTVCT) the chain is Extracellular. 3 N-linked (GlcNAc...) asparagine glycosylation sites follow: N605, N625, and N643.

Belongs to the concentrative nucleoside transporter (CNT) (TC 2.A.41) family. Post-translationally, N-glycosylated. N-glycosylation is required for localization to the plasma membrane and the transporter activity.

The protein resides in the cell membrane. The protein localises to the apical cell membrane. The enzyme catalyses uridine(out) + Na(+)(out) = uridine(in) + Na(+)(in). It carries out the reaction thymidine(out) + Na(+)(out) = thymidine(in) + Na(+)(in). The catalysed reaction is cytidine(out) + Na(+)(out) = cytidine(in) + Na(+)(in). It catalyses the reaction adenosine(out) + Na(+)(out) = adenosine(in) + Na(+)(in). With respect to regulation, due to its high apparent affinity but slow transport, adenosine could act as a negative regulator of pyrimidine transport under some conditions. Its function is as follows. Sodium and pyrimidine nucleoside symporter of the plasma membrane that imports uridine, thymidine and cytidine into cells by coupling their transport to the transmembrane sodium electrochemical gradient. Also transports adenosine, an atypical substrate transported with high apparent affinity, but low maximum velocity. Therefore, exhibits the transport characteristics of the nucleoside transport system cit or N2 subtype (N2/cit). Involved in renal nucleoside (re)absorption. In Mus musculus (Mouse), this protein is Sodium/nucleoside cotransporter 1.